A 388-amino-acid polypeptide reads, in one-letter code: 1D-myo-inositol 2-acetamido-2-deoxy-alpha-D-glucopyranoside deacetylase (388 aa).

Zn(2+)-binding residues include His-6, Asp-9, and His-144. Residues 369-388 are disordered; that stretch reads LDQADEGAAHDTSEQSGQRR.

The protein belongs to the MshB deacetylase family. Requires Zn(2+) as cofactor.

It carries out the reaction 1D-myo-inositol 2-acetamido-2-deoxy-alpha-D-glucopyranoside + H2O = 1D-myo-inositol 2-amino-2-deoxy-alpha-D-glucopyranoside + acetate. Its function is as follows. Catalyzes the deacetylation of 1D-myo-inositol 2-acetamido-2-deoxy-alpha-D-glucopyranoside (GlcNAc-Ins) in the mycothiol biosynthesis pathway. In Corynebacterium kroppenstedtii (strain DSM 44385 / JCM 11950 / CIP 105744 / CCUG 35717), this protein is 1D-myo-inositol 2-acetamido-2-deoxy-alpha-D-glucopyranoside deacetylase.